The sequence spans 109 residues: MIMQKRLLNRNSSVVKSRNCLARHQHESSISKLHVSLRLHRCLRPIVRFDFLHNAGSKVCSQNSCPSPQLHVGTMALFHTVFILWPHFCGILWTVHEKLYNYLLSIEVY.

Residues 75-95 (MALFHTVFILWPHFCGILWTV) form a helical membrane-spanning segment.

The protein localises to the membrane. This is an uncharacterized protein from Saccharomyces cerevisiae (strain ATCC 204508 / S288c) (Baker's yeast).